The primary structure comprises 450 residues: Keratin, type I cytoskeletal 25 (450 aa).

The tract at residues 1-24 is disordered; that stretch reads MSLRLPSGSRRASPRPTTGSLRLS. The interval 1-78 is head; sequence MSLRLPSGSR…MNEGGLLSGN (78 aa). Residues 79–114 form a coil 1A region; it reads EKVTMQNLNDRLASYLENVRALEEANADLEQKIKGW. The IF rod domain occupies 79–394; the sequence is EKVTMQNLND…LLIGGDDGAC (316 aa). Positions 115 to 136 are linker 1; the sequence is YEKFGPGSCRGLDHDYSRYFPI. The tract at residues 137–228 is coil 1B; it reads IEDLKNQIIA…KNHKEEMQVL (92 aa). The interval 229–251 is linker 12; it reads QCAAGGNVNVEMNAAPGVDLTVL. The interval 252-390 is coil 2; sequence LNNMRAEYEA…ETYCLLIGGD (139 aa). Positions 391–450 are tail; it reads DGACKSGGYKSKDYAAGNMGNQMKDPIKAIVVKKVLEEVDQRSKILTTRLHSLEEKSQSN. Position 442 is a phosphoserine (serine 442).

It belongs to the intermediate filament family. As to quaternary structure, heterodimer of a type I and a type II keratin. Heterodimer with type II keratin KRT5 leading to the formation of keratin intermediate filament (KIF) network. Interacts with KRT6A to form filaments.

The protein localises to the cytoplasm. Its function is as follows. Essential for the proper assembly of type I and type II keratin protein complexes and formation of keratin intermediate filaments in the inner root sheath (irs). Plays a role in the cytoskeleton organization. The chain is Keratin, type I cytoskeletal 25 from Capra hircus (Goat).